We begin with the raw amino-acid sequence, 432 residues long: Adenosylmethionine-8-amino-7-oxononanoate aminotransferase (432 aa).

Trp52 provides a ligand contact to substrate. 112–113 serves as a coordination point for pyridoxal 5'-phosphate; sequence GS. Residue Tyr144 coordinates substrate. Asp245 is a pyridoxal 5'-phosphate binding site. Substrate contacts are provided by Lys274 and Gly307. The residue at position 274 (Lys274) is an N6-(pyridoxal phosphate)lysine. Position 308–309 (308–309) interacts with pyridoxal 5'-phosphate; that stretch reads PT. Residue Arg391 coordinates substrate.

It belongs to the class-III pyridoxal-phosphate-dependent aminotransferase family. BioA subfamily. In terms of assembly, homodimer. Pyridoxal 5'-phosphate is required as a cofactor.

It is found in the cytoplasm. It catalyses the reaction (8S)-8-amino-7-oxononanoate + S-adenosyl-L-methionine = S-adenosyl-4-methylsulfanyl-2-oxobutanoate + (7R,8S)-7,8-diammoniononanoate. It functions in the pathway cofactor biosynthesis; biotin biosynthesis; 7,8-diaminononanoate from 8-amino-7-oxononanoate (SAM route): step 1/1. In terms of biological role, catalyzes the transfer of the alpha-amino group from S-adenosyl-L-methionine (SAM) to 7-keto-8-aminopelargonic acid (KAPA) to form 7,8-diaminopelargonic acid (DAPA). It is the only aminotransferase known to utilize SAM as an amino donor. The sequence is that of Adenosylmethionine-8-amino-7-oxononanoate aminotransferase from Buchnera aphidicola subsp. Schizaphis graminum (strain Sg).